The primary structure comprises 84 residues: Beta-toxin Ct16 (84 aa).

An N-terminal signal peptide occupies residues 1–19 (MNYFILLFVATFLLLDVNC). The LCN-type CS-alpha/beta domain occupies 21-80 (KDGYPVDANNCKFECWKNEYCDELCKAKRAESGYCYKLKLSCWCEGLPDDEPTKTSDRCY). Intrachain disulfides connect cysteine 31-cysteine 79, cysteine 35-cysteine 55, cysteine 41-cysteine 62, and cysteine 45-cysteine 64. Position 82 is a threonine amide (threonine 82).

Belongs to the long (4 C-C) scorpion toxin superfamily. Sodium channel inhibitor family. Alpha subfamily. In terms of tissue distribution, expressed by the venom gland.

The protein localises to the secreted. Its function is as follows. Alpha toxins bind voltage-independently at site-3 of sodium channels (Nav) and inhibit the inactivation of the activated channels, thereby blocking neuronal transmission. Is possibly toxic to mice. In Centruroides tecomanus (Scorpion), this protein is Beta-toxin Ct16.